A 932-amino-acid chain; its full sequence is MAPPQRHPQRSEQVLLLTLLGTLWGAAAAQIRYSIPEELEKGSFVGNIVKDLGLEPQELAEHGVRIVSRGRMQLFSLNPRNGSLVTAGRIDREELCAQSPRCLVSFNILVEDKLNLYPVEVEIVDINDNTPRFLKEELEVKILENAAPSSRFPLMEVYDPDVGMNSLQGFKLSGNSYFSVDVQSEAHGPKYPELVLEGTLDREGEAVYRLVLTAMDGGDPVRSSIAQILVTVLDVNDNTPVFTQPVYRVSVPENLPVGTPVLAVTATDQDEGVHGEVTYSFVKITEKISQIFCLNVLTGEISTSANLDYEDSSFYELGVEARDGPGLRDRAKVLITILDVNDNVPEVVVTSGSRTIAESAPPGTVIALFQVFDRDSGLNGLVTCSIPRSLPFELEKSVGNYYRLVTNAALDREEVFLYNITVTATDKGTPPLSTETIISLNVADTNDNPPTFPHSSYSVYVLENNPRGASIFSVNALDPDVDQNAQVSYSLAEDTLQGAPLSSYVSINSDTGILYALRSFDYEQLRDLQLWVTASDSGDPPLSSNVSLSLFVLDQNDNAPEILYPALPTDGSTGVELAPRSAEPGYLVTKVVAVDRDSGQNAWLSYRLLKASEPGLFSVGLHTGEVRTARALLDRDALKQSLVVAVQDHGQPPLSATVTLTVAVADRIPDILADLGSLEPSAKPNDSDLTLYLVVAVAAVSCVFLAFVIVLLALRLQRWHKSRLLQASGGGLASMPGSHFVGVDGVRAFLQTYSHEVSLTADSRKSHLIFPQPNYADTLINQESYEKSEPLLITQDLLETKGDPRQLQQAPPNTDWRFSQAQRPGTSGSQNGDDTGTWPNNQFDTEMLQAMILASASEAADGSSTLGGGAGTMGLSARYGPQFTLQHVPDYRQNVYIPGSNATLTNAAGKRDGKAPAGGNGNKKKSGKKEKK.

Positions 1 to 29 (MAPPQRHPQRSEQVLLLTLLGTLWGAAAA) are cleaved as a signal peptide. Cadherin domains follow at residues 30–133 (QIRY…TPRF), 134–242 (LKEE…TPVF), 243–347 (TQPV…VPEV), 348–452 (VVTS…PPTF), 453–562 (PHSS…APEI), and 570–682 (DGST…EPSA). Over 30-692 (QIRYSIPEEL…KPNDSDLTLY (663 aa)) the chain is Extracellular. N81 is a glycosylation site (N-linked (GlcNAc...) asparagine). N419 and N545 each carry an N-linked (GlcNAc...) asparagine glycan. N685 carries N-linked (GlcNAc...) asparagine glycosylation. A helical membrane pass occupies residues 693–713 (LVVAVAAVSCVFLAFVIVLLA). The Cytoplasmic segment spans residues 714 to 932 (LRLQRWHKSR…KKKSGKKEKK (219 aa)). Disordered stretches follow at residues 803–841 (DPRQ…WPNN) and 902–932 (ATLT…KEKK). The segment covering 806-841 (QLQQAPPNTDWRFSQAQRPGTSGSQNGDDTGTWPNN) has biased composition (polar residues). The segment covering 922 to 932 (NKKKSGKKEKK) has biased composition (basic residues).

Its subcellular location is the cell membrane. Potential calcium-dependent cell-adhesion protein. May be involved in the establishment and maintenance of specific neuronal connections in the brain. The polypeptide is Protocadherin gamma-A6 (PCDHGA6) (Pan troglodytes (Chimpanzee)).